A 609-amino-acid chain; its full sequence is Dynamin-like protein 2 (609 aa).

The interval 1–16 is inserts into assembly domain of DLP1, required for tetramerization; the sequence is MQINLLNDFIKAYENT. Residues 17 to 25 form a linker region; sequence YSVSFDDSF. The region spanning 63-310 is the Dynamin-type G domain; the sequence is NIAIIGQFSS…FVGIFDRLLN (248 aa). A G1 motif region spans residues 68 to 75; sequence GQFSSGKS. 72–76 is a GDP binding site; that stretch reads SGKSS. The G2 motif stretch occupies residues 93-95; that stretch reads PVT. The tract at residues 158 to 161 is G3 motif; the sequence is DTPG. The segment at 216 to 219 is G4 motif; sequence NQKD.

This sequence belongs to the TRAFAC class dynamin-like GTPase superfamily. Dynamin/Fzo/YdjA family. As to quaternary structure, forms a 2:2 heterotetramer with DLP1. DLP2 forms a central back-to-back dimer flanked on each side by a DLP1 subunit. In the crystal structures the 2 DLP1 subunits are in very different conformations.

It is found in the cytoplasm. The protein localises to the cytosol. The enzyme catalyses GTP + H2O = GDP + phosphate + H(+). In terms of biological role, the heterotetrameric DLP1(2)-DLP2(2) complex tethers liposomes and may mediate their fusion. Initial binding is probably mediated by DLP1, while DLP2 couples DLP1 subunits and increases the effective reach of the complex up to 45 nm. The role of the nucleotide is unknown. This subunit alone very weakly binds to liposomes; GTP, GDP, GMPPCP and GMPPNP do not change heterotetramer binding. Tetramerization is required for GTPase activity, suggesting the GTPase domains (dynamin-type G) from DLP1 and DLP2 must dimerize to reconstitute the GTPase active site. The protein is Dynamin-like protein 2 of Campylobacter jejuni subsp. jejuni serotype O:23/36 (strain 81-176).